The primary structure comprises 411 residues: Serine--tRNA ligase (411 aa).

226–228 (TSE) is a binding site for L-serine. ATP is bound at residue 257–259 (RKE). Glutamate 280 lines the L-serine pocket. 344-347 (EISS) contributes to the ATP binding site. An L-serine-binding site is contributed by serine 379.

Belongs to the class-II aminoacyl-tRNA synthetase family. Type-1 seryl-tRNA synthetase subfamily. As to quaternary structure, homodimer. The tRNA molecule binds across the dimer.

It localises to the cytoplasm. It catalyses the reaction tRNA(Ser) + L-serine + ATP = L-seryl-tRNA(Ser) + AMP + diphosphate + H(+). It carries out the reaction tRNA(Sec) + L-serine + ATP = L-seryl-tRNA(Sec) + AMP + diphosphate + H(+). Its pathway is aminoacyl-tRNA biosynthesis; selenocysteinyl-tRNA(Sec) biosynthesis; L-seryl-tRNA(Sec) from L-serine and tRNA(Sec): step 1/1. In terms of biological role, catalyzes the attachment of serine to tRNA(Ser). Is also able to aminoacylate tRNA(Sec) with serine, to form the misacylated tRNA L-seryl-tRNA(Sec), which will be further converted into selenocysteinyl-tRNA(Sec). This Campylobacter jejuni subsp. jejuni serotype O:2 (strain ATCC 700819 / NCTC 11168) protein is Serine--tRNA ligase.